A 253-amino-acid polypeptide reads, in one-letter code: Putative B3 domain-containing protein Os03g0619850 (253 aa).

The segment at residues 26–119 (MSCFLIRMTT…CFEVMILDSD (94 aa)) is a DNA-binding region (TF-B3). Disordered regions lie at residues 126–150 (LKSN…AGPP) and 230–253 (HRDA…EQDS). Basic and acidic residues predominate over residues 230–239 (HRDADQERQM).

The protein resides in the nucleus. In Oryza sativa subsp. japonica (Rice), this protein is Putative B3 domain-containing protein Os03g0619850.